The chain runs to 338 residues: Anthranilate phosphoribosyltransferase (338 aa).

5-phospho-alpha-D-ribose 1-diphosphate is bound by residues Gly-80, 83–84 (GD), Thr-88, 90–93 (NIST), 108–116 (KHGNRAVSS), and Ser-120. Gly-80 lines the anthranilate pocket. Ser-92 is a binding site for Mg(2+). Asn-111 serves as a coordination point for anthranilate. Residue Arg-166 coordinates anthranilate. 2 residues coordinate Mg(2+): Asp-225 and Glu-226.

Belongs to the anthranilate phosphoribosyltransferase family. As to quaternary structure, homodimer. The cofactor is Mg(2+).

The catalysed reaction is N-(5-phospho-beta-D-ribosyl)anthranilate + diphosphate = 5-phospho-alpha-D-ribose 1-diphosphate + anthranilate. Its pathway is amino-acid biosynthesis; L-tryptophan biosynthesis; L-tryptophan from chorismate: step 2/5. In terms of biological role, catalyzes the transfer of the phosphoribosyl group of 5-phosphorylribose-1-pyrophosphate (PRPP) to anthranilate to yield N-(5'-phosphoribosyl)-anthranilate (PRA). This is Anthranilate phosphoribosyltransferase from Thermoanaerobacter sp. (strain X514).